The chain runs to 259 residues: Protein GrpE (259 aa).

Disordered regions lie at residues 1–75 (MNSD…KGSD) and 227–259 (GPGP…KDEN). The span at 20–40 (NNPSENFVSSSNSNESVNQVE) shows a compositional bias: low complexity. Residues 46–60 (EVEHQVKNDSVDTAK) show a composition bias toward basic and acidic residues. The segment covering 61 to 73 (EQSSTSCESNIKG) has biased composition (polar residues).

This sequence belongs to the GrpE family. In terms of assembly, homodimer.

It localises to the cytoplasm. Functionally, participates actively in the response to hyperosmotic and heat shock by preventing the aggregation of stress-denatured proteins, in association with DnaK and GrpE. It is the nucleotide exchange factor for DnaK and may function as a thermosensor. Unfolded proteins bind initially to DnaJ; upon interaction with the DnaJ-bound protein, DnaK hydrolyzes its bound ATP, resulting in the formation of a stable complex. GrpE releases ADP from DnaK; ATP binding to DnaK triggers the release of the substrate protein, thus completing the reaction cycle. Several rounds of ATP-dependent interactions between DnaJ, DnaK and GrpE are required for fully efficient folding. This chain is Protein GrpE, found in Prochlorococcus marinus (strain NATL1A).